Here is a 388-residue protein sequence, read N- to C-terminus: Pepsin A-1 (388 aa).

The N-terminal stretch at 1–15 (MKWLLLLGLVALSEC) is a signal peptide. 2 propeptides (activation peptide) span residues 16–40 (IIYK…LLKD) and 41–62 (FLKK…APTL). The Peptidase A1 domain maps to 76-385 (YFGTIGIGTP…DRANNQVGLA (310 aa)). Residue aspartate 94 is part of the active site. The cysteines at positions 107 and 112 are disulfide-linked. Serine 130 is modified (phosphoserine). A disulfide bridge connects residues cysteine 268 and cysteine 272. Aspartate 277 is a catalytic residue. Cysteines 311 and 344 form a disulfide.

This sequence belongs to the peptidase A1 family. In terms of processing, each pepsinogen is converted to corresponding pepsin at pH 2.0 in part as a result of the release of a 47 AA activation segment and in part as a result of stepwise proteolytic cleavage via an intermediate form(s).

It is found in the secreted. The enzyme catalyses Preferential cleavage: hydrophobic, preferably aromatic, residues in P1 and P1' positions. Cleaves 1-Phe-|-Val-2, 4-Gln-|-His-5, 13-Glu-|-Ala-14, 14-Ala-|-Leu-15, 15-Leu-|-Tyr-16, 16-Tyr-|-Leu-17, 23-Gly-|-Phe-24, 24-Phe-|-Phe-25 and 25-Phe-|-Tyr-26 bonds in the B chain of insulin.. In terms of biological role, shows particularly broad specificity; although bonds involving phenylalanine and leucine are preferred, many others are also cleaved to some extent. This is Pepsin A-1 (PGA) from Macaca fuscata fuscata (Japanese macaque).